A 67-amino-acid polypeptide reads, in one-letter code: Conotoxin Cp1.1 (67 aa).

The first 26 residues, 1–26, serve as a signal peptide directing secretion; it reads MMFRLTSVSCFLLVIACLNLFQVVLT. 4 cysteine pairs are disulfide-bonded: Cys29-Cys43, Cys36-Cys48, Cys42-Cys52, and Cys47-Cys56. At Tyr60 the chain carries Tyrosine amide. The propeptide occupies 64 to 67; that stretch reads ATFQ.

Belongs to the conotoxin I2 superfamily. As to expression, expressed by the venom duct.

The protein localises to the secreted. The protein is Conotoxin Cp1.1 of Conus capitaneus (Captain cone).